The sequence spans 457 residues: Ribosomal RNA-processing protein 8 (457 aa).

2 disordered regions span residues 52–114 (LSQQ…EVER) and 148–235 (SLNS…QETR). Phosphoserine occurs at positions 62, 64, and 105. Over residues 148–165 (SLNSVDQTVHNSRTSTAT) the composition is skewed to polar residues. 2 positions are modified to phosphoserine: serine 172 and serine 177. The segment covering 174-183 (ESASPNSSHT) has biased composition (polar residues). Residues 184–203 (LSRKQWRNRQKNKRRHKNKF) show a composition bias toward basic residues. Positions 282, 317, 335, 347, 348, and 364 each coordinate S-adenosyl-L-methionine.

The protein belongs to the methyltransferase superfamily. RRP8 family. Component of the eNoSC complex, composed of SIRT1, SUV39H1 and RRP8.

The protein localises to the nucleus. The protein resides in the nucleolus. Essential component of the eNoSC (energy-dependent nucleolar silencing) complex, a complex that mediates silencing of rDNA in response to intracellular energy status and acts by recruiting histone-modifying enzymes. The eNoSC complex is able to sense the energy status of cell: upon glucose starvation, elevation of NAD(+)/NADP(+) ratio activates SIRT1, leading to histone H3 deacetylation followed by dimethylation of H3 at 'Lys-9' (H3K9me2) by SUV39H1 and the formation of silent chromatin in the rDNA locus. In the complex, RRP8 binds to H3K9me2 and probably acts as a methyltransferase. Its substrates are however unknown. This Rattus norvegicus (Rat) protein is Ribosomal RNA-processing protein 8 (Rrp8).